We begin with the raw amino-acid sequence, 361 residues long: Phosphoserine aminotransferase (361 aa).

Residues serine 9 and arginine 42 each coordinate L-glutamate. Pyridoxal 5'-phosphate is bound by residues 76–77 (GR), tryptophan 102, threonine 153, aspartate 173, and glutamine 196. Lysine 197 carries the post-translational modification N6-(pyridoxal phosphate)lysine. 238–239 (NT) is a binding site for pyridoxal 5'-phosphate.

The protein belongs to the class-V pyridoxal-phosphate-dependent aminotransferase family. SerC subfamily. In terms of assembly, homodimer. The cofactor is pyridoxal 5'-phosphate.

The protein resides in the cytoplasm. It carries out the reaction O-phospho-L-serine + 2-oxoglutarate = 3-phosphooxypyruvate + L-glutamate. The enzyme catalyses 4-(phosphooxy)-L-threonine + 2-oxoglutarate = (R)-3-hydroxy-2-oxo-4-phosphooxybutanoate + L-glutamate. It functions in the pathway amino-acid biosynthesis; L-serine biosynthesis; L-serine from 3-phospho-D-glycerate: step 2/3. Its pathway is cofactor biosynthesis; pyridoxine 5'-phosphate biosynthesis; pyridoxine 5'-phosphate from D-erythrose 4-phosphate: step 3/5. Its function is as follows. Catalyzes the reversible conversion of 3-phosphohydroxypyruvate to phosphoserine and of 3-hydroxy-2-oxo-4-phosphonooxybutanoate to phosphohydroxythreonine. This Cronobacter sakazakii (strain ATCC BAA-894) (Enterobacter sakazakii) protein is Phosphoserine aminotransferase.